Consider the following 199-residue polypeptide: Protein p2 (199 aa).

The protein resides in the host cytoplasm. The polypeptide is Protein p2 (Avena sativa (Oat)).